A 33-amino-acid chain; its full sequence is Phosphoglycerate kinase (33 aa).

AMP is bound at residue Lys13. Lys13 is a binding site for ATP.

The protein belongs to the phosphoglycerate kinase family. In terms of assembly, monomer. It depends on Mg(2+) as a cofactor.

It catalyses the reaction (2R)-3-phosphoglycerate + ATP = (2R)-3-phospho-glyceroyl phosphate + ADP. The polypeptide is Phosphoglycerate kinase (Pseudotsuga menziesii (Douglas-fir)).